The sequence spans 473 residues: GTPase Der (473 aa).

EngA-type G domains lie at 3–167 and 203–378; these read FKVA…KGLE and LRVA…TFWN. Residues 9 to 16, 56 to 60, 119 to 122, 209 to 216, 256 to 260, and 321 to 324 contribute to the GTP site; these read GRPNVGKS, DTAGL, NKCE, DTAGM, and NKWD. One can recognise a KH-like domain in the interval 379-463; it reads ARVPTARLNR…PIRLFMRKTH (85 aa).

This sequence belongs to the TRAFAC class TrmE-Era-EngA-EngB-Septin-like GTPase superfamily. EngA (Der) GTPase family. As to quaternary structure, associates with the 50S ribosomal subunit.

In terms of biological role, GTPase that plays an essential role in the late steps of ribosome biogenesis. The sequence is that of GTPase Der from Parvibaculum lavamentivorans (strain DS-1 / DSM 13023 / NCIMB 13966).